The following is a 624-amino-acid chain: Chaperone protein HtpG (624 aa).

Positions Met1–Arg336 are a; substrate-binding. Residues Glu337–Lys552 are b. Residues Leu553–Ser624 form a c region.

Belongs to the heat shock protein 90 family. Homodimer.

The protein localises to the cytoplasm. In terms of biological role, molecular chaperone. Has ATPase activity. This chain is Chaperone protein HtpG, found in Salmonella paratyphi B (strain ATCC BAA-1250 / SPB7).